Here is a 255-residue protein sequence, read N- to C-terminus: uncharacterized protein (255 aa).

The NADP(+) site is built by Ile13, Arg37, Asp55, Asn81, Tyr148, Lys152, Val180, and Thr182. Tyr148 functions as the Proton donor in the catalytic mechanism. The Lowers pKa of active site Tyr role is filled by Lys152.

Belongs to the short-chain dehydrogenases/reductases (SDR) family.

Its function is as follows. Involved in osmoadaptation. This is an uncharacterized protein from Emericella nidulans (strain FGSC A4 / ATCC 38163 / CBS 112.46 / NRRL 194 / M139) (Aspergillus nidulans).